The chain runs to 67 residues: Inosine/xanthosine triphosphatase (67 aa).

It belongs to the YjjX NTPase family. Homodimer. Mg(2+) serves as cofactor. Mn(2+) is required as a cofactor.

It catalyses the reaction XTP + H2O = XDP + phosphate + H(+). It carries out the reaction ITP + H2O = IDP + phosphate + H(+). In terms of biological role, phosphatase that hydrolyzes non-canonical purine nucleotides such as XTP and ITP to their respective diphosphate derivatives. Probably excludes non-canonical purines from DNA/RNA precursor pool, thus preventing their incorporation into DNA/RNA and avoiding chromosomal lesions. The chain is Inosine/xanthosine triphosphatase from Enterobacter cloacae.